Here is a 75-residue protein sequence, read N- to C-terminus: UPF0291 protein Teth39_0326 (75 aa).

Belongs to the UPF0291 family.

Its subcellular location is the cytoplasm. The polypeptide is UPF0291 protein Teth39_0326 (Thermoanaerobacter pseudethanolicus (strain ATCC 33223 / 39E) (Clostridium thermohydrosulfuricum)).